Here is a 282-residue protein sequence, read N- to C-terminus: Phosphatidylserine decarboxylase proenzyme (282 aa).

Active-site charge relay system; for autoendoproteolytic cleavage activity residues include Asp-88, His-144, and Ser-247. The Schiff-base intermediate with substrate; via pyruvic acid; for decarboxylase activity role is filled by Ser-247. At Ser-247 the chain carries Pyruvic acid (Ser); by autocatalysis.

The protein belongs to the phosphatidylserine decarboxylase family. PSD-B subfamily. Prokaryotic type I sub-subfamily. Heterodimer of a large membrane-associated beta subunit and a small pyruvoyl-containing alpha subunit. Pyruvate serves as cofactor. Post-translationally, is synthesized initially as an inactive proenzyme. Formation of the active enzyme involves a self-maturation process in which the active site pyruvoyl group is generated from an internal serine residue via an autocatalytic post-translational modification. Two non-identical subunits are generated from the proenzyme in this reaction, and the pyruvate is formed at the N-terminus of the alpha chain, which is derived from the carboxyl end of the proenzyme. The autoendoproteolytic cleavage occurs by a canonical serine protease mechanism, in which the side chain hydroxyl group of the serine supplies its oxygen atom to form the C-terminus of the beta chain, while the remainder of the serine residue undergoes an oxidative deamination to produce ammonia and the pyruvoyl prosthetic group on the alpha chain. During this reaction, the Ser that is part of the protease active site of the proenzyme becomes the pyruvoyl prosthetic group, which constitutes an essential element of the active site of the mature decarboxylase.

The protein resides in the cell membrane. It catalyses the reaction a 1,2-diacyl-sn-glycero-3-phospho-L-serine + H(+) = a 1,2-diacyl-sn-glycero-3-phosphoethanolamine + CO2. It participates in phospholipid metabolism; phosphatidylethanolamine biosynthesis; phosphatidylethanolamine from CDP-diacylglycerol: step 2/2. In terms of biological role, catalyzes the formation of phosphatidylethanolamine (PtdEtn) from phosphatidylserine (PtdSer). The polypeptide is Phosphatidylserine decarboxylase proenzyme (Xanthomonas campestris pv. campestris (strain B100)).